We begin with the raw amino-acid sequence, 387 residues long: G2/mitotic-specific cyclin-B2 (387 aa).

Belongs to the cyclin family. Cyclin AB subfamily. In terms of assembly, interacts with the CDK1 protein kinase to form a serine/threonine kinase holoenzyme complex also known as maturation promoting factor (MPF). The cyclin subunit imparts substrate specificity to the complex.

Its function is as follows. Essential for the control of the cell cycle at the G2/M (mitosis) transition. The protein is G2/mitotic-specific cyclin-B2 (ccnb2) of Oryzias latipes (Japanese rice fish).